The following is a 329-amino-acid chain: Biotin synthase (329 aa).

In terms of domain architecture, Radical SAM core spans Gly-36–Lys-260. Residues Cys-51, Cys-55, and Cys-58 each coordinate [4Fe-4S] cluster. [2Fe-2S] cluster contacts are provided by Cys-95, Cys-126, Cys-186, and Arg-264.

This sequence belongs to the radical SAM superfamily. Biotin synthase family. As to quaternary structure, homodimer. The cofactor is [4Fe-4S] cluster. [2Fe-2S] cluster serves as cofactor.

The catalysed reaction is (4R,5S)-dethiobiotin + (sulfur carrier)-SH + 2 reduced [2Fe-2S]-[ferredoxin] + 2 S-adenosyl-L-methionine = (sulfur carrier)-H + biotin + 2 5'-deoxyadenosine + 2 L-methionine + 2 oxidized [2Fe-2S]-[ferredoxin]. It functions in the pathway cofactor biosynthesis; biotin biosynthesis; biotin from 7,8-diaminononanoate: step 2/2. Functionally, catalyzes the conversion of dethiobiotin (DTB) to biotin by the insertion of a sulfur atom into dethiobiotin via a radical-based mechanism. This chain is Biotin synthase, found in Sphingopyxis alaskensis (strain DSM 13593 / LMG 18877 / RB2256) (Sphingomonas alaskensis).